Here is a 471-residue protein sequence, read N- to C-terminus: UDP-N-acetylmuramate--L-alanine ligase (471 aa).

114–120 contributes to the ATP binding site; the sequence is GTHGKTT.

It belongs to the MurCDEF family.

The protein resides in the cytoplasm. It catalyses the reaction UDP-N-acetyl-alpha-D-muramate + L-alanine + ATP = UDP-N-acetyl-alpha-D-muramoyl-L-alanine + ADP + phosphate + H(+). It functions in the pathway cell wall biogenesis; peptidoglycan biosynthesis. Its function is as follows. Cell wall formation. The protein is UDP-N-acetylmuramate--L-alanine ligase of Methylobacterium nodulans (strain LMG 21967 / CNCM I-2342 / ORS 2060).